Reading from the N-terminus, the 95-residue chain is Co-chaperonin GroES (95 aa).

This sequence belongs to the GroES chaperonin family. As to quaternary structure, heptamer of 7 subunits arranged in a ring. Interacts with the chaperonin GroEL.

It is found in the cytoplasm. Its function is as follows. Together with the chaperonin GroEL, plays an essential role in assisting protein folding. The GroEL-GroES system forms a nano-cage that allows encapsulation of the non-native substrate proteins and provides a physical environment optimized to promote and accelerate protein folding. GroES binds to the apical surface of the GroEL ring, thereby capping the opening of the GroEL channel. This is Co-chaperonin GroES from Ruegeria sp. (strain TM1040) (Silicibacter sp.).